A 346-amino-acid chain; its full sequence is UPF0425 pyridoxal phosphate-dependent protein MK0620 (346 aa).

Lys-206 bears the N6-(pyridoxal phosphate)lysine mark.

Requires pyridoxal 5'-phosphate as cofactor.

In Methanopyrus kandleri (strain AV19 / DSM 6324 / JCM 9639 / NBRC 100938), this protein is UPF0425 pyridoxal phosphate-dependent protein MK0620.